A 269-amino-acid polypeptide reads, in one-letter code: Shikimate dehydrogenase (NADP(+)) (269 aa).

Residues 15 to 17 (SLS) and T62 each bind shikimate. The Proton acceptor role is filled by K66. Shikimate-binding residues include N86 and D100. Residues 124–128 (GAGGA), 147–152 (NRTPER), and I211 contribute to the NADP(+) site. Y213 contacts shikimate. G234 serves as a coordination point for NADP(+).

The protein belongs to the shikimate dehydrogenase family. In terms of assembly, homodimer.

The enzyme catalyses shikimate + NADP(+) = 3-dehydroshikimate + NADPH + H(+). The protein operates within metabolic intermediate biosynthesis; chorismate biosynthesis; chorismate from D-erythrose 4-phosphate and phosphoenolpyruvate: step 4/7. Involved in the biosynthesis of the chorismate, which leads to the biosynthesis of aromatic amino acids. Catalyzes the reversible NADPH linked reduction of 3-dehydroshikimate (DHSA) to yield shikimate (SA). The chain is Shikimate dehydrogenase (NADP(+)) from Methanococcoides burtonii (strain DSM 6242 / NBRC 107633 / OCM 468 / ACE-M).